A 206-amino-acid polypeptide reads, in one-letter code: 2,3-bisphosphoglycerate-dependent phosphoglycerate mutase (206 aa).

Substrate contacts are provided by residues 9-16, 22-23, R61, 88-91, K99, 115-116, and 159-160; these read RHGQSEWN, TG, ERDY, RR, and GN. The Tele-phosphohistidine intermediate role is filled by H10. The Proton donor/acceptor role is filled by E88.

It belongs to the phosphoglycerate mutase family. BPG-dependent PGAM subfamily. Homodimer.

The catalysed reaction is (2R)-2-phosphoglycerate = (2R)-3-phosphoglycerate. It functions in the pathway carbohydrate degradation; glycolysis; pyruvate from D-glyceraldehyde 3-phosphate: step 3/5. Functionally, catalyzes the interconversion of 2-phosphoglycerate and 3-phosphoglycerate. This is 2,3-bisphosphoglycerate-dependent phosphoglycerate mutase from Azorhizobium caulinodans (strain ATCC 43989 / DSM 5975 / JCM 20966 / LMG 6465 / NBRC 14845 / NCIMB 13405 / ORS 571).